An 85-amino-acid chain; its full sequence is Small ribosomal subunit protein bS20 (85 aa).

Residues 1–22 (MPQIKSAIKRVKTQNATNKRNA) form a disordered region. The segment covering 13 to 22 (TQNATNKRNA) has biased composition (polar residues).

The protein belongs to the bacterial ribosomal protein bS20 family.

Functionally, binds directly to 16S ribosomal RNA. In Lactobacillus acidophilus (strain ATCC 700396 / NCK56 / N2 / NCFM), this protein is Small ribosomal subunit protein bS20.